A 641-amino-acid chain; its full sequence is Probable potassium transport system protein Kup 4 (641 aa).

12 consecutive transmembrane segments (helical) span residues 31–51 (AALG…LYTL), 64–84 (TASA…TISI), 119–139 (ILAV…VITP), 155–175 (GSLK…FFAA), 183–203 (IGAA…VLGL), 221–241 (AIGF…GVFL), 265–285 (WYAI…ALLI), 298–318 (LCPT…TIIA), 355–375 (IYVP…TIAF), 381–401 (LAGA…CLLF), 412–432 (LAVS…FFGA), and 437–457 (IAEG…LMLT).

This sequence belongs to the HAK/KUP transporter (TC 2.A.72) family.

The protein resides in the cell inner membrane. The enzyme catalyses K(+)(in) + H(+)(in) = K(+)(out) + H(+)(out). Functionally, transport of potassium into the cell. Likely operates as a K(+):H(+) symporter. This is Probable potassium transport system protein Kup 4 from Bradyrhizobium sp. (strain BTAi1 / ATCC BAA-1182).